A 48-amino-acid chain; its full sequence is Sulfide dehydrogenase [flavocytochrome c] flavoprotein chain (48 aa).

FAD is bound at residue 40 to 46; that stretch reads VTCPFSN.

As to quaternary structure, dimer of one cytochrome and one flavoprotein.

Its subcellular location is the periplasm. The enzyme catalyses hydrogen sulfide + 2 Fe(III)-[cytochrome c] = sulfur + 2 Fe(II)-[cytochrome c] + H(+). The chain is Sulfide dehydrogenase [flavocytochrome c] flavoprotein chain from Chlorobaculum thiosulfatiphilum (Chlorobium limicola f.sp. thiosulfatophilum).